The following is a 391-amino-acid chain: Elongation factor Tu (391 aa).

A tr-type G domain is found at 10-201 (KPHVNIGTIG…EVDKYIPTPE (192 aa)). Residues 19–26 (GHVDHGKT) form a G1 region. 19–26 (GHVDHGKT) serves as a coordination point for GTP. Position 26 (T26) interacts with Mg(2+). A G2 region spans residues 55-59 (GITIS). The interval 76-79 (DCPG) is G3. Residues 76–80 (DCPGH) and 131–134 (NKVD) each bind GTP. Residues 131–134 (NKVD) form a G4 region. Positions 169–171 (SAL) are G5.

The protein belongs to the TRAFAC class translation factor GTPase superfamily. Classic translation factor GTPase family. EF-Tu/EF-1A subfamily. Monomer.

The protein resides in the cytoplasm. It carries out the reaction GTP + H2O = GDP + phosphate + H(+). Its function is as follows. GTP hydrolase that promotes the GTP-dependent binding of aminoacyl-tRNA to the A-site of ribosomes during protein biosynthesis. This is Elongation factor Tu from Chelativorans sp. (strain BNC1).